The chain runs to 634 residues: Chaperone protein dnaK2 (634 aa).

Thr-197 carries the phosphothreonine; by autocatalysis modification. The segment covering 601-623 (GAAAAESGADAGAAGAGDSSSGD) has biased composition (low complexity). The disordered stretch occupies residues 601 to 634 (GAAAAESGADAGAAGAGDSSSGDDVIDAEFTESK). Positions 624-634 (DVIDAEFTESK) are enriched in acidic residues.

It belongs to the heat shock protein 70 family.

Acts as a chaperone. The protein is Chaperone protein dnaK2 (dnaK2) of Prochlorococcus marinus (strain MIT 9313).